We begin with the raw amino-acid sequence, 314 residues long: tRNA pseudouridine synthase B (314 aa).

The active-site Nucleophile is the D47.

It belongs to the pseudouridine synthase TruB family. Type 1 subfamily.

It carries out the reaction uridine(55) in tRNA = pseudouridine(55) in tRNA. Responsible for synthesis of pseudouridine from uracil-55 in the psi GC loop of transfer RNAs. The chain is tRNA pseudouridine synthase B from Vibrio campbellii (strain ATCC BAA-1116).